The sequence spans 429 residues: Enolase (429 aa).

Gln-165 is a binding site for (2R)-2-phosphoglycerate. Glu-207 functions as the Proton donor in the catalytic mechanism. Mg(2+) contacts are provided by Asp-244, Glu-287, and Asp-314. Lys-339, Arg-368, Ser-369, and Lys-390 together coordinate (2R)-2-phosphoglycerate. The active-site Proton acceptor is Lys-339.

It belongs to the enolase family. The cofactor is Mg(2+).

It is found in the cytoplasm. It localises to the secreted. Its subcellular location is the cell surface. It catalyses the reaction (2R)-2-phosphoglycerate = phosphoenolpyruvate + H2O. Its pathway is carbohydrate degradation; glycolysis; pyruvate from D-glyceraldehyde 3-phosphate: step 4/5. In terms of biological role, catalyzes the reversible conversion of 2-phosphoglycerate (2-PG) into phosphoenolpyruvate (PEP). It is essential for the degradation of carbohydrates via glycolysis. This Roseiflexus castenholzii (strain DSM 13941 / HLO8) protein is Enolase.